A 244-amino-acid polypeptide reads, in one-letter code: MKIFVYYTPERVPDGTVAECAIAVDVLRATTTIATALAAGAEAIQVFSDLDKLIATSATWPAERCIRVGERGGKTVDGFDMGNSPFDCTPERVKACRLFMSTTNGTRSLQRIESAKTVIAAALVNREAVAKFIYTQQPETVWIVGSGWEGSYSLEDTVCAGAIAHSLLLATGIPLEDLAGNDETIAAIALYRSYREDLLSLLQQASHGKRLLNLNCHEDLKYCSQTDILDVLPVQQQPGVLVAH.

This sequence belongs to the ComB family. Mg(2+) is required as a cofactor.

It carries out the reaction (2R)-O-phospho-3-sulfolactate + H2O = (2R)-3-sulfolactate + phosphate. The sequence is that of Probable 2-phosphosulfolactate phosphatase from Cyanothece sp. (strain PCC 7425 / ATCC 29141).